The sequence spans 165 residues: Thiol peroxidase (165 aa).

A Thioredoxin domain is found at 18–164 (RKVGDKAPNF…YEAAIEAAKK (147 aa)). The active-site Cysteine sulfenic acid (-SOH) intermediate is C60. A disulfide bridge links C60 with C94.

This sequence belongs to the peroxiredoxin family. Tpx subfamily. Homodimer.

The catalysed reaction is a hydroperoxide + [thioredoxin]-dithiol = an alcohol + [thioredoxin]-disulfide + H2O. Functionally, thiol-specific peroxidase that catalyzes the reduction of hydrogen peroxide and organic hydroperoxides to water and alcohols, respectively. Plays a role in cell protection against oxidative stress by detoxifying peroxides. The chain is Thiol peroxidase from Listeria monocytogenes serovar 1/2a (strain ATCC BAA-679 / EGD-e).